Here is a 621-residue protein sequence, read N- to C-terminus: Chaperone protein HscA homolog (621 aa).

This sequence belongs to the heat shock protein 70 family.

Its function is as follows. Chaperone involved in the maturation of iron-sulfur cluster-containing proteins. Has a low intrinsic ATPase activity which is markedly stimulated by HscB. The chain is Chaperone protein HscA homolog from Ralstonia pickettii (strain 12J).